The following is a 253-amino-acid chain: MKFAIETINLHVYYGRNHVLRGINLQIPQRGIFAIMGPSGCGKSTLLRTFNRLIELNQDARVEGEVRIFGKNIYSEDVDPIEVRKKVGMVFQYPNPFPHLTIYENVAIGVKLNKLVKSQKELDERVRWALKKAALWEEVKDRLNDYPGNLSGGQRQRLVIARVLAMKPDILLMDEPTANIDPVGTAKIEELLLELKTDYTIVLVTHSPAQAARIADYVAFLYLGKLIEVGPTRKVFENPEHELTEKYVTGALG.

The 244-residue stretch at 5-248 (IETINLHVYY…PEHELTEKYV (244 aa)) folds into the ABC transporter domain. 37–44 (GPSGCGKS) is a binding site for ATP.

Belongs to the ABC transporter superfamily. Phosphate importer (TC 3.A.1.7) family. In terms of assembly, the complex is composed of two ATP-binding proteins (PstB), two transmembrane proteins (PstC and PstA) and a solute-binding protein (PstS).

The protein resides in the cell membrane. It catalyses the reaction phosphate(out) + ATP + H2O = ADP + 2 phosphate(in) + H(+). Functionally, part of the ABC transporter complex PstSACB involved in phosphate import. Responsible for energy coupling to the transport system. The chain is Phosphate import ATP-binding protein PstB from Pyrococcus furiosus (strain ATCC 43587 / DSM 3638 / JCM 8422 / Vc1).